A 484-amino-acid chain; its full sequence is Synaptic vesicle membrane protein VAT-1 homolog (484 aa).

Composition is skewed to low complexity over residues 1–13 (MSGE…QQNA) and 40–61 (SAST…PAAE). 2 disordered regions span residues 1-65 (MSGE…KAPE) and 402-484 (IGKI…KEEN). Basic and acidic residues predominate over residues 411 to 484 (PMKEEEKKEE…KKEEVKKEEN (74 aa)).

This sequence belongs to the zinc-containing alcohol dehydrogenase family. Quinone oxidoreductase subfamily.

The chain is Synaptic vesicle membrane protein VAT-1 homolog from Danio rerio (Zebrafish).